We begin with the raw amino-acid sequence, 414 residues long: UPF0754 membrane protein tlr2287 (414 aa).

Transmembrane regions (helical) follow at residues 2 to 22 and 386 to 406; these read ADISYWTLLVPPLAGGVIGYF and AIVRLGGILGFLIGVVQAGVL.

Belongs to the UPF0754 family.

Its subcellular location is the cell inner membrane. The protein is UPF0754 membrane protein tlr2287 of Thermosynechococcus vestitus (strain NIES-2133 / IAM M-273 / BP-1).